The primary structure comprises 532 residues: MRLLSVLLIGFLCLAGTYAQKYQLSPAYNDPYLTDDKTGTHDFWVQNASLPVFYGFHDWNFQDNSGIMEINGDEMHITGKIYPTVNMGDCHRYNVDLVFKKDKSGNVMPKKELRESAYVPHGPIDPATWKYYTFVQGKWTGFGCDPQNVVFSGAEGGMPLQLGYGANGKNGDNGISVWLIYGYTIVDINCNIRPIITQSPTQPPTQPPTYPPTQPPTQPPTQPPTYPPTYPPTYPPTYPPTYPPTHPPTYPPTYPPTQPPTQPPVQDCSTLECPEGFHCEIVNNRRTCVCDTTVPPTHPPTQSPTYPPTQPPTQPPTYPPTYPPTYPPTQPPRASCDNVRCPRGYHCECNHWENVARCVRNEEPTHRPKPPHHGCRPDSCARGEKCICVRGKIYCIPKTTCDQVRCPRKHHCECNRKGQVFCVPDCPKLTCKQVGCPENHECVSRRGELHCVYVRPPTGRWGDDLSDLGYNQASVEAAIDAYEAQRGQRPHNNIPSNNLHQENNDNLGDGFYDGVEIGFADGGFDVNDLNGF.

An N-terminal signal peptide occupies residues 1–19 (MRLLSVLLIGFLCLAGTYA). Residue Asn-47 is glycosylated (N-linked (GlcNAc...) asparagine). The disordered stretch occupies residues 197–265 (TQSPTQPPTQ…PTQPPTQPPV (69 aa)). The span at 201 to 263 (TQPPTQPPTY…YPPTQPPTQP (63 aa)) shows a compositional bias: pro residues. The 23-residue stretch at 267-289 (DCSTLECPEGFHCEIVNNRRTCV) folds into the Follistatin-like 1 domain. The tract at residues 297 to 320 (THPPTQSPTYPPTQPPTQPPTYPP) is disordered. 3 consecutive Follistatin-like domains span residues 335-359 (SCDNVRCPRGYHCECNHWENVARCV), 400-423 (TCDQVRCPRKHHCECNRKGQVFCV), and 430-452 (TCKQVGCPENHECVSRRGELHCV).

Binds to cotE. In terms of processing, O-glycosylated.

It localises to the spore wall. In terms of biological role, required for incorporation of cotE into the spore coat and for the formation of the outer layer. Has a cross-bridging function between cellulose and other coat proteins. This Dictyostelium discoideum (Social amoeba) protein is Spore coat protein SP85 (pspB).